We begin with the raw amino-acid sequence, 506 residues long: Maturase K (506 aa).

Belongs to the intron maturase 2 family. MatK subfamily.

It is found in the plastid. It localises to the chloroplast. In terms of biological role, usually encoded in the trnK tRNA gene intron. Probably assists in splicing its own and other chloroplast group II introns. In Lactuca sativa (Garden lettuce), this protein is Maturase K.